A 209-amino-acid polypeptide reads, in one-letter code: Mitochondrial import inner membrane translocase subunit Tim23 (209 aa).

Helical transmembrane passes span 73–93, 125–145, and 172–194; these read FELAFFTIGGCCMTGAAFGAM, ALWANTLGSLALLYSAFGVII, and GGLRGAARGGLAGLTLTGLYALY.

The protein belongs to the Tim17/Tim22/Tim23 family. In terms of assembly, component of the TIM23 complex at least composed of TIMM23, TIMM17 (TIMM17A or TIMM17B) and TIMM50; within this complex, directly interacts with TIMM50. The complex interacts with the TIMM44 component of the PAM complex and with DNAJC15. Upon mitochondrial depolarization, interacts with PINK1; the interaction is required for PINK1 accumulation at the outer mitochondrial membrane, kinase activation by autophosphorylation and PRKN recruitement to mitochondria.

Its subcellular location is the mitochondrion inner membrane. In terms of biological role, essential component of the TIM23 complex, a complex that mediates the translocation of transit peptide-containing proteins across the mitochondrial inner membrane. Has a role in the activation of stress-induced mitophagy by protecting PINK1 from OMA1-mediated degradation and facilitating its accumulation at the outer mitochondrial membrane in response to depolarization. The sequence is that of Mitochondrial import inner membrane translocase subunit Tim23 (TIMM23) from Bos taurus (Bovine).